We begin with the raw amino-acid sequence, 326 residues long: Small ribosomal subunit biogenesis GTPase RsgA (326 aa).

A CP-type G domain is found at 80-241; that stretch reads LSHQMHIIAS…IIDTPGIKGF (162 aa). GTP-binding positions include 129–132 and 183–191; these read NKID and GHSGVGKST. Zn(2+)-binding residues include Cys265, Cys270, His272, and Cys278.

The protein belongs to the TRAFAC class YlqF/YawG GTPase family. RsgA subfamily. In terms of assembly, monomer. Associates with 30S ribosomal subunit, binds 16S rRNA. Requires Zn(2+) as cofactor.

It localises to the cytoplasm. One of several proteins that assist in the late maturation steps of the functional core of the 30S ribosomal subunit. Helps release RbfA from mature subunits. May play a role in the assembly of ribosomal proteins into the subunit. Circularly permuted GTPase that catalyzes slow GTP hydrolysis, GTPase activity is stimulated by the 30S ribosomal subunit. This chain is Small ribosomal subunit biogenesis GTPase RsgA, found in Flavobacterium psychrophilum (strain ATCC 49511 / DSM 21280 / CIP 103535 / JIP02/86).